The following is a 376-amino-acid chain: Histidinol-phosphate aminotransferase (376 aa).

The residue at position 230 (lysine 230) is an N6-(pyridoxal phosphate)lysine.

It belongs to the class-II pyridoxal-phosphate-dependent aminotransferase family. Histidinol-phosphate aminotransferase subfamily. As to quaternary structure, homodimer. Pyridoxal 5'-phosphate serves as cofactor.

It catalyses the reaction L-histidinol phosphate + 2-oxoglutarate = 3-(imidazol-4-yl)-2-oxopropyl phosphate + L-glutamate. It participates in amino-acid biosynthesis; L-histidine biosynthesis; L-histidine from 5-phospho-alpha-D-ribose 1-diphosphate: step 7/9. In Trichodesmium erythraeum (strain IMS101), this protein is Histidinol-phosphate aminotransferase.